Consider the following 89-residue polypeptide: Small ribosomal subunit protein uS19 (89 aa).

This sequence belongs to the universal ribosomal protein uS19 family.

Protein S19 forms a complex with S13 that binds strongly to the 16S ribosomal RNA. The chain is Small ribosomal subunit protein uS19 from Rhodopirellula baltica (strain DSM 10527 / NCIMB 13988 / SH1).